The following is a 182-amino-acid chain: Large ribosomal subunit protein uL6 (182 aa).

Belongs to the universal ribosomal protein uL6 family. In terms of assembly, part of the 50S ribosomal subunit.

Its function is as follows. This protein binds to the 23S rRNA, and is important in its secondary structure. It is located near the subunit interface in the base of the L7/L12 stalk, and near the tRNA binding site of the peptidyltransferase center. In Carboxydothermus hydrogenoformans (strain ATCC BAA-161 / DSM 6008 / Z-2901), this protein is Large ribosomal subunit protein uL6.